The primary structure comprises 119 residues: MKRVAFVFSSAPHGSAAGREGLDALLATSALTDDIGVFFVGDGVFQLLPEQRPGAVLARDYIATFKLLSLYDIDQCWLCADSARERGLDPATPWVVDVECLAPDALRARLHEFDVILRF.

The protein belongs to the DsrF/TusC family. As to quaternary structure, heterohexamer, formed by a dimer of trimers. The hexameric TusBCD complex contains 2 copies each of TusB, TusC and TusD. The TusBCD complex interacts with TusE.

The protein localises to the cytoplasm. Functionally, part of a sulfur-relay system required for 2-thiolation of 5-methylaminomethyl-2-thiouridine (mnm(5)s(2)U) at tRNA wobble positions. This Klebsiella pneumoniae subsp. pneumoniae (strain ATCC 700721 / MGH 78578) protein is Protein TusC.